A 947-amino-acid polypeptide reads, in one-letter code: Protein translocase subunit SecA (947 aa).

ATP-binding positions include Gln-87, 105–109 (GEGKT), and Asp-494. Positions 860–947 (TAPKPLPTQE…NRAPKSKRKR (88 aa)) are disordered. Residues 870 to 885 (AAARTTGTAAPTALRA) are compositionally biased toward low complexity. Basic and acidic residues-rich tracts occupy residues 903 to 914 (EDGKAKATRDSA) and 922 to 931 (ASRRERREAA).

This sequence belongs to the SecA family. As to quaternary structure, monomer and homodimer. Part of the essential Sec protein translocation apparatus which comprises SecA, SecYEG and auxiliary proteins SecDF. Other proteins may also be involved.

It localises to the cell membrane. It is found in the cytoplasm. It carries out the reaction ATP + H2O + cellular proteinSide 1 = ADP + phosphate + cellular proteinSide 2.. Its function is as follows. Part of the Sec protein translocase complex. Interacts with the SecYEG preprotein conducting channel. Has a central role in coupling the hydrolysis of ATP to the transfer of proteins into and across the cell membrane, serving as an ATP-driven molecular motor driving the stepwise translocation of polypeptide chains across the membrane. This Rhodococcus erythropolis (strain PR4 / NBRC 100887) protein is Protein translocase subunit SecA.